The following is an 853-amino-acid chain: Replication protein A 70 kDa DNA-binding subunit C (853 aa).

Residues 118 to 282 form a disordered region; it reads PKEPGHSSIN…QSAYQPQQPP (165 aa). Composition is skewed to polar residues over residues 124-144, 159-173, 180-194, 201-211, 222-249, and 263-278; these read SSIN…SEQQ, SANS…NSSD, SANS…SSSD, SANSPQRQVVH, PQVS…SSNA, and TATT…AYQP. Positions 312–399 form a DNA-binding region, OB; it reads WTIKVRVTSK…NDYEIHLDSA (88 aa). The segment at 602–628 adopts a C4-type zinc-finger fold; it reads CPIMNGDRPCSKKVTNNGDGTWRCEKC.

It belongs to the replication factor A protein 1 family. Heterotrimer of RPA1, RPA2 and RPA3 (canonical replication protein A complex).

The protein resides in the nucleus. In terms of biological role, component of the replication protein A complex (RPA) required for DNA recombination, repair and replication. The activity of RPA is mediated by single-stranded DNA binding and protein interactions. Probably involved in repair of double-strand DNA breaks (DSBs) induced by genotoxic stresses. This chain is Replication protein A 70 kDa DNA-binding subunit C (RPA1C), found in Arabidopsis thaliana (Mouse-ear cress).